The chain runs to 66 residues: uncharacterized protein (66 aa).

This is an uncharacterized protein from Methanocaldococcus jannaschii (strain ATCC 43067 / DSM 2661 / JAL-1 / JCM 10045 / NBRC 100440) (Methanococcus jannaschii).